A 529-amino-acid chain; its full sequence is Cytokinin dehydrogenase 4 (529 aa).

A signal peptide spans M1–H27. An FAD-binding PCMH-type domain is found at C63–A244. The FAD site is built by A99, G101, and G103. H104 carries the post-translational modification Pros-8alpha-FAD histidine. 7 residues coordinate FAD: S105, Q109, D168, T173, S179, V183, and I234. N-linked (GlcNAc...) asparagine glycosylation is found at N285, N419, and N425. FAD-binding residues include Y479 and Q517.

Belongs to the oxygen-dependent FAD-linked oxidoreductase family. Monomer. FAD serves as cofactor. In terms of tissue distribution, expressed in inflorescence meristems.

Its subcellular location is the secreted. It is found in the extracellular space. It carries out the reaction N(6)-dimethylallyladenine + A + H2O = 3-methyl-2-butenal + adenine + AH2. Functionally, catalyzes the oxidation of cytokinins, a family of N(6)-substituted adenine derivatives that are plant hormones, where the substituent is an isopentenyl group. The protein is Cytokinin dehydrogenase 4 (CKX4) of Oryza sativa subsp. japonica (Rice).